The sequence spans 621 residues: Interleukin-1 receptor-associated kinase-like 2 (621 aa).

A Death domain is found at 13–94 (LDDLCRNMDT…RAAQIILNWK (82 aa)). Residues 113–175 (GKPLAASVRN…TASADSKDFS (63 aa)) are disordered. Over residues 157–169 (ASSSLKTNQTASA) the composition is skewed to polar residues. The Protein kinase domain occupies 206–476 (FNPSHKISEG…AEALVMAACL (271 aa)). ATP is bound by residues 212–220 (ISEGTFADV), Lys233, and 333–336 (KSSN). Residues 503-522 (ETSLPCSGLSEGTGSSFNTP) are compositionally biased toward polar residues. A disordered region spans residues 503 to 534 (ETSLPCSGLSEGTGSSFNTPEETDDVDNSSFD).

The protein belongs to the protein kinase superfamily. TKL Ser/Thr protein kinase family. Pelle subfamily. As to quaternary structure, interacts with MYD88. IL-1 stimulation leads to the formation of a signaling complex which dissociates from the IL-1 receptor following the binding of PELI1.

Its function is as follows. Binds to the IL-1 type I receptor following IL-1 engagement, triggering intracellular signaling cascades leading to transcriptional up-regulation and mRNA stabilization. The protein is Interleukin-1 receptor-associated kinase-like 2 (IRAK2) of Bos taurus (Bovine).